The chain runs to 191 residues: CASP-like protein 2U3 (191 aa).

At 1-25 (MGAYDGAEAPRAAPASTAANSRPSR) the chain is on the cytoplasmic side. A helical membrane pass occupies residues 26–46 (LLLLHSLLLRLVAVVVSILVI). Topologically, residues 47-68 (AVMVHAKQRVMIFKAEWDNSKA) are extracellular. A helical transmembrane segment spans residues 69 to 89 (FVALVAISAICLGYSFLQFIL). Residues 90–114 (SAFHLCSKSWKSPTKCWAWMNFIAD) lie on the Cytoplasmic side of the membrane. Residues 115-135 (QILTYAMLGAAAAAAELAYIA) form a helical membrane-spanning segment. The Extracellular portion of the chain corresponds to 136–157 (KNGSSRAQWQPICSTFNTFCTR). N-linked (GlcNAc...) asparagine glycosylation is present at asparagine 137. The helical transmembrane segment at 158 to 178 (AGASIILSFIAVLALANSSAI) threads the bilayer. The Cytoplasmic segment spans residues 179–191 (SAYHLFRRPSSSV).

This sequence belongs to the Casparian strip membrane proteins (CASP) family. In terms of assembly, homodimer and heterodimers.

Its subcellular location is the cell membrane. The polypeptide is CASP-like protein 2U3 (Selaginella moellendorffii (Spikemoss)).